Here is a 324-residue protein sequence, read N- to C-terminus: Carbonic anhydrase, chloroplastic (324 aa).

Belongs to the beta-class carbonic anhydrase family. In terms of assembly, homohexamer.

It localises to the plastid. The protein localises to the chloroplast stroma. The enzyme catalyses hydrogencarbonate + H(+) = CO2 + H2O. In terms of biological role, reversible hydration of carbon dioxide. This chain is Carbonic anhydrase, chloroplastic, found in Hordeum vulgare (Barley).